We begin with the raw amino-acid sequence, 1087 residues long: Platelet-derived growth factor receptor alpha (1087 aa).

Positions 1 to 24 (MMPAMRASLILGCLLIIGPWAILA) are cleaved as a signal peptide. Over 25-530 (ENPLPTIFPD…PTLRSELTVA (506 aa)) the chain is Extracellular. 2 Ig-like C2-type domains span residues 27–114 (PLPT…SEIE) and 118–211 (IYIY…LQTW). The cysteines at positions 50 and 101 are disulfide-linked. Residues Asn-77 and Asn-104 are each glycosylated (N-linked (GlcNAc...) asparagine). Cys-151 and Cys-192 are joined by a disulfide. Asn-216, Asn-282, Asn-309, Asn-356, Asn-362, Asn-461, and Asn-471 each carry an N-linked (GlcNAc...) asparagine glycan. 3 Ig-like C2-type domains span residues 217-309 (ISVE…KKTN), 315-409 (KGFI…KSYS), and 417-519 (PALI…LKLV). An intrachain disulfide couples Cys-238 to Cys-293. A disulfide bond links Cys-438 and Cys-503. A helical membrane pass occupies residues 531 to 551 (AAVLVLLVIVIISLIVLVIIW). The Cytoplasmic segment spans residues 552 to 1087 (KQKPRYEIRW…SSDLVEDSFL (536 aa)). Phosphotyrosine; by autocatalysis occurs at positions 574 and 576. The region spanning 595–970 (LVLGRILGSG…CYETVLHDFL (376 aa)) is the Protein kinase domain. Residues 601 to 609 (LGSGAFGKV) and Lys-629 each bind ATP. A phosphotyrosine; by autocatalysis mark is found at Tyr-722, Tyr-733, Tyr-744, Tyr-756, and Tyr-764. Asp-818 functions as the Proton acceptor in the catalytic mechanism. Phosphotyrosine; by autocatalysis is present on residues Tyr-849, Tyr-988, and Tyr-1017. The interval 1017–1064 (YIIPLPDIDPVSEDESGKRNRHSSQTSEESAIETGSSSSTFIKRDDET) is disordered. A compositionally biased stretch (polar residues) spans 1039-1057 (SSQTSEESAIETGSSSSTF).

It belongs to the protein kinase superfamily. Tyr protein kinase family. CSF-1/PDGF receptor subfamily. In terms of assembly, interacts with homodimeric pdgfa, pdgfb and pdgfc, and with heterodimers formed by pdgfa and pdgfb. Monomer in the absence of bound ligand. Interaction with dimeric pdgfa, pdgfb and/or pdgfc leads to receptor dimerization, where both pdgfra homodimers and heterodimers with pdgfrb are observed. Post-translationally, ubiquitinated, leading to its internalization and degradation. Autophosphorylated on tyrosine residues upon ligand binding. Autophosphorylation occurs in trans, i.e. one subunit of the dimeric receptor phosphorylates tyrosine residues on the other subunit.

The protein resides in the cell membrane. It is found in the cell projection. The protein localises to the cilium. It localises to the golgi apparatus. It carries out the reaction L-tyrosyl-[protein] + ATP = O-phospho-L-tyrosyl-[protein] + ADP + H(+). Its activity is regulated as follows. Present in an inactive conformation in the absence of bound ligand. Binding of pdgfa and/or pdgfb leads to dimerization and activation by autophosphorylation on tyrosine residues. Functionally, tyrosine-protein kinase that acts as a cell-surface receptor for pdgfa, pdgfb and pdgfc and plays an essential role in the regulation of embryonic development, cell proliferation, survival and chemotaxis. Depending on the context, promotes or inhibits cell proliferation and cell migration. Plays an important role in the differentiation of bone marrow-derived mesenchymal stem cells. Required for normal skeleton development. Required for normal development of the gastrointestinal tract. Plays a role in cell migration and chemotaxis in wound healing. Plays a role in platelet activation, secretion of agonists from platelet granules, and in thrombin-induced platelet aggregation. Binding of its cognate ligands - homodimeric pdgfa, homodimeric pdgfb, heterodimers formed by pdgfa and pdgfb or homodimeric pdgfc -leads to the activation of several signaling cascades; the response depends on the nature of the bound ligand and is modulated by the formation of heterodimers between pdgfra and pdgfrb. Phosphorylates pik3r1, plcg1, and ptpn11. Activation of plcg1 leads to the production of the cellular signaling molecules diacylglycerol and inositol 1,4,5-trisphosphate, mobilization of cytosolic Ca(2+) and the activation of protein kinase C. Phosphorylates pik3r1, the regulatory subunit of phosphatidylinositol 3-kinase, and thereby mediates activation of the akt1 signaling pathway. Mediates activation of hras and of the MAP kinases mapk1/erk2 and/or mapk3/erk1. Promotes activation of stat family members stat1, stat3 and stat5a and/or stat5b. Receptor signaling is down-regulated by protein phosphatases that dephosphorylate the receptor and its down-stream effectors, and by rapid internalization of the activated receptor. This is Platelet-derived growth factor receptor alpha (pdgfra) from Xenopus laevis (African clawed frog).